The chain runs to 354 residues: MGCTLSAEERAALERSKAIEKNLKEDGISAAKDVKLLLLGAGESGKSTIVKQMKIIHEDGFSGEDVKQYKPVVYSNTIQSLAAIVRAMDTLGIEYGDKERKADAKMVCDVVSRMEDTEPFSAELLSAMMRLWGDSGIQECFNRSREYQLNDSAKYYLDSLDRIGAADYQPTEQDILRTRVKTTGIVETHFTFKNLHFRLFDVGGQRSERKKWIHCFEDVTAIIFCVALSGYDQVLHEDETTNRMHESLMLFDSICNNKFFIDTSIILFLNKKDLFGEKIKKSPLTICFPEYTGPNTYEDAAAYIQAQFESKNRSPNKEIYCHMTCATDTNNIQVVFDAVTDIIIANNLRGCGLY.

G2 is lipidated: N-myristoyl glycine. C3 carries the S-palmitoyl cysteine lipid modification. The G-alpha domain occupies 32 to 354; the sequence is KDVKLLLLGA…ANNLRGCGLY (323 aa). Positions 35–48 are G1 motif; that stretch reads KLLLLGAGESGKST. E43, K46, S47, T48, S152, L176, R177, T178, and R179 together coordinate GTP. Residue S47 coordinates Mg(2+). Positions 174 to 182 are G2 motif; it reads DILRTRVKT. The residue at position 179 (R179) is an ADP-ribosylarginine; by cholera toxin. T182 lines the Mg(2+) pocket. The interval 197-206 is G3 motif; sequence FRLFDVGGQR. Position 205 is a 5-glutamyl histamine (Q205). The segment at 266–273 is G4 motif; the sequence is ILFLNKKD. The GTP site is built by N270, D273, and C325. The interval 324–329 is G5 motif; it reads TCATDT. Residue C351 is the site of S-palmitoyl cysteine attachment. C351 carries the ADP-ribosylcysteine; by pertussis toxin modification.

It belongs to the G-alpha family. G(i/o/t/z) subfamily. In terms of assembly, g proteins are composed of 3 units; alpha, beta and gamma. The alpha chain contains the guanine nucleotide binding site. Forms a complex with GNB1 and GNG3. Interacts with RGS14. Interacts with RGS16. Interacts with RGS19. Interacts (when palmitoylated) with ADGRG3. Histaminylated at Gln-205 residues by TGM2. Post-translationally, palmitoylated at Cys-351, leading to binding to ADGRG3.

The protein resides in the cell membrane. The protein localises to the membrane. The catalysed reaction is GTP + H2O = GDP + phosphate + H(+). The GTPase activity is promoted by GTPAse activators, such as RGS14, RGS16 and RGS19. Guanine nucleotide-binding proteins (G proteins) function as transducers downstream of G protein-coupled receptors (GPCRs) in numerous signaling cascades. The alpha chain contains the guanine nucleotide binding site and alternates between an active, GTP-bound state and an inactive, GDP-bound state. Signaling by an activated GPCR promotes GDP release and GTP binding. The alpha subunit has a low GTPase activity that converts bound GTP to GDP, thereby terminating the signal. Both GDP release and GTP hydrolysis are modulated by numerous regulatory proteins. Signaling is mediated via effector proteins, such as adenylate cyclase. Inhibits adenylate cyclase activity, leading to decreased intracellular cAMP levels. This chain is Guanine nucleotide-binding protein G(o) subunit alpha (GNAO1), found in Homo sapiens (Human).